Consider the following 148-residue polypeptide: Methylglyoxal synthase (148 aa).

Residues 4 to 148 (VSVPAIKRIV…LSYNTKVKKD (145 aa)) form the MGS-like domain. Substrate-binding positions include His-17, Lys-21, 43–46 (TGTT), and 63–64 (SG). Asp-69 acts as the Proton donor/acceptor in catalysis. Residue His-96 coordinates substrate.

The protein belongs to the methylglyoxal synthase family.

The enzyme catalyses dihydroxyacetone phosphate = methylglyoxal + phosphate. In terms of biological role, catalyzes the formation of methylglyoxal from dihydroxyacetone phosphate. The protein is Methylglyoxal synthase of Leptospira interrogans serogroup Icterohaemorrhagiae serovar copenhageni (strain Fiocruz L1-130).